Reading from the N-terminus, the 241-residue chain is Carboxy-S-adenosyl-L-methionine synthase (241 aa).

S-adenosyl-L-methionine-binding positions include Tyr38, 63–65, 88–89, 116–117, Asn131, and Arg198; these read GCS, DN, and DI.

This sequence belongs to the class I-like SAM-binding methyltransferase superfamily. Cx-SAM synthase family. As to quaternary structure, homodimer.

It carries out the reaction prephenate + S-adenosyl-L-methionine = carboxy-S-adenosyl-L-methionine + 3-phenylpyruvate + H2O. Its function is as follows. Catalyzes the conversion of S-adenosyl-L-methionine (SAM) to carboxy-S-adenosyl-L-methionine (Cx-SAM). This Histophilus somni (strain 129Pt) (Haemophilus somnus) protein is Carboxy-S-adenosyl-L-methionine synthase.